The chain runs to 22 residues: MRHSNKIRDEEMVNNTRLNXXA.

Basic and acidic residues predominate over residues 1-11 (MRHSNKIRDEE). Positions 1–22 (MRHSNKIRDEEMVNNTRLNXXA) are disordered. Over residues 13–22 (VNNTRLNXXA) the composition is skewed to polar residues.

The N-terminus is blocked.

The chain is Unknown endosperm protein L from Hordeum vulgare (Barley).